The sequence spans 502 residues: Hexokinase-4 (502 aa).

A helical transmembrane segment spans residues 4 to 24; the sequence is VLVMLTAAAAVVACSVATVMV. The Hexokinase domain occupies 35-491; it reads RRVVGLLKDL…SSIGSALLLA (457 aa). Residues 90–228 form a hexokinase small subdomain region; the sequence is NGSETGTYYA…GLDIRVAALV (139 aa). ADP-binding residues include Gly104 and Ser105. Residues Thr194, Lys195, Asn229, and Asp230 each coordinate D-glucose. The interval 229–480 is hexokinase large subdomain; the sequence is NDTVGALSFG…QHVVVKAMED (252 aa). Position 253 (Thr253) interacts with ADP. Residues Asn256, Glu284, and Glu315 each coordinate D-glucose. Gly445 is a binding site for ADP.

It belongs to the hexokinase family.

Its subcellular location is the mitochondrion outer membrane. It catalyses the reaction a D-hexose + ATP = a D-hexose 6-phosphate + ADP + H(+). It carries out the reaction D-fructose + ATP = D-fructose 6-phosphate + ADP + H(+). The catalysed reaction is D-glucose + ATP = D-glucose 6-phosphate + ADP + H(+). The protein operates within carbohydrate metabolism; hexose metabolism. It participates in carbohydrate degradation; glycolysis; D-glyceraldehyde 3-phosphate and glycerone phosphate from D-glucose: step 1/4. Functionally, fructose and glucose phosphorylating enzyme. May be involved in the phosphorylation of glucose during the export from mitochondrion to cytosol. The polypeptide is Hexokinase-4 (Arabidopsis thaliana (Mouse-ear cress)).